Here is a 294-residue protein sequence, read N- to C-terminus: HTH-type transcriptional regulator DgdR (294 aa).

The region spanning 14–70 (LEIDLLRSFVVIAEVRALSRAAARVGRTQSALSQQMKRLEDIVDQPLFQRTGRGVVL) is the HTH lysR-type domain. The segment at residues 31-50 (LSRAAARVGRTQSALSQQMK) is a DNA-binding region (H-T-H motif).

The protein belongs to the LysR transcriptional regulatory family.

This chain is HTH-type transcriptional regulator DgdR (dgdR), found in Burkholderia cepacia (Pseudomonas cepacia).